Reading from the N-terminus, the 132-residue chain is Fatty acid-binding protein 2 (132 aa).

Ser2 bears the N-acetylserine mark. Hexadecanoate-binding positions include Gln40 and 128 to 130 (RYY).

It belongs to the calycin superfamily. Fatty-acid binding protein (FABP) family. As to quaternary structure, monomer. As to expression, midgut.

Its subcellular location is the cytoplasm. Its function is as follows. Binds fatty acids in a 1:1 molar ratio. In Manduca sexta (Tobacco hawkmoth), this protein is Fatty acid-binding protein 2 (MFB2).